The sequence spans 357 residues: Peptide chain release factor 1 (357 aa).

The residue at position 234 (Q234) is an N5-methylglutamine.

It belongs to the prokaryotic/mitochondrial release factor family. Post-translationally, methylated by PrmC. Methylation increases the termination efficiency of RF1.

Its subcellular location is the cytoplasm. Functionally, peptide chain release factor 1 directs the termination of translation in response to the peptide chain termination codons UAG and UAA. The sequence is that of Peptide chain release factor 1 from Alkaliphilus oremlandii (strain OhILAs) (Clostridium oremlandii (strain OhILAs)).